The sequence spans 434 residues: Alpha-enolase (434 aa).

Ser40 provides a ligand contact to Mg(2+). Substrate-binding residues include His158 and Glu167. Glu210 (proton donor) is an active-site residue. Residues Asp245, Glu293, and Asp318 each contribute to the Mg(2+) site. Residues Glu293 and Asp318 each coordinate substrate. Lys343 functions as the Proton acceptor in the catalytic mechanism. Substrate contacts are provided by residues 370 to 373 (SHRS) and Lys394.

It belongs to the enolase family. As to quaternary structure, homodimer. Requires Mg(2+) as cofactor.

The protein localises to the cytoplasm. It catalyses the reaction (2R)-2-phosphoglycerate = phosphoenolpyruvate + H2O. The protein operates within carbohydrate degradation; glycolysis; pyruvate from D-glyceraldehyde 3-phosphate: step 4/5. Functionally, both an enzyme and a lens structural protein. This chain is Alpha-enolase (ENO1), found in Anas platyrhynchos (Mallard).